We begin with the raw amino-acid sequence, 261 residues long: Hemin import ATP-binding protein HmuV (261 aa).

An ABC transporter domain is found at 7 to 243; sequence LRGQNLSLQF…EIIDAVYGYK (237 aa). 39–46 contacts ATP; that stretch reads GPNGAGKS.

This sequence belongs to the ABC transporter superfamily. Heme (hemin) importer (TC 3.A.1.14.5) family. In terms of assembly, the complex is composed of two ATP-binding proteins (HmuV), two transmembrane proteins (HmuU) and a solute-binding protein (HmuT).

It is found in the cell inner membrane. Part of the ABC transporter complex HmuTUV involved in hemin import. Responsible for energy coupling to the transport system. The chain is Hemin import ATP-binding protein HmuV from Vibrio vulnificus (strain CMCP6).